The sequence spans 219 residues: MPKAFLIDTTRCTACRGCQLACKEWHDLPANVTKQRGSHQNPPDLNPNNLKIVRFNERMNEKGVVIWNFFPDQCRHCVTPVCVDVADMAVPGAMIKDKKTGAVLATEKSAKLSPADAKAVAEACPYNIPRIDPKTKRITKCDMCFDRVSAGMQPICVKTCPTGTMAFGERDEMLALAEKRLADAKTRFPKAHLVDVEDVSVIYLLAEEKEHYYEYAGFM.

Residues Lys-3 to Val-32 enclose the 4Fe-4S ferredoxin-type 1 domain. The [4Fe-4S] cluster site is built by Cys-12, Cys-15, Cys-18, Cys-22, Cys-74, Cys-77, Cys-82, Cys-124, Cys-141, Cys-144, Cys-156, and Cys-160. The 4Fe-4S ferredoxin-type 2 domain maps to Asp-132–Asp-171.

In terms of assembly, heterotrimer of cytochrome c3 FDH2C and formate dehydrogenase FDH2 alpha and beta subunits that forms the FdhABC(3) complex. [4Fe-4S] cluster is required as a cofactor.

The protein localises to the periplasm. Beta chain of the formate dehydrogenase (FDH) that catalyzes the reversible two-electron oxidation of formate to carbon dioxide. The beta chain is an electron transfer unit. The chain is Formate dehydrogenase 2 subunit beta (cytochrome c-553) from Nitratidesulfovibrio vulgaris (strain ATCC 29579 / DSM 644 / CCUG 34227 / NCIMB 8303 / VKM B-1760 / Hildenborough) (Desulfovibrio vulgaris).